The primary structure comprises 249 residues: 5'-nucleotidase SurE (249 aa).

A divalent metal cation is bound by residues aspartate 8, aspartate 9, serine 39, and asparagine 96.

Belongs to the SurE nucleotidase family. A divalent metal cation serves as cofactor.

It localises to the cytoplasm. It catalyses the reaction a ribonucleoside 5'-phosphate + H2O = a ribonucleoside + phosphate. Functionally, nucleotidase that shows phosphatase activity on nucleoside 5'-monophosphates. The sequence is that of 5'-nucleotidase SurE from Clostridium tetani (strain Massachusetts / E88).